The following is a 527-amino-acid chain: Bromodomain-containing protein 9 (527 aa).

A compositionally biased stretch (basic residues) spans 1–16 (MNVSVTKRRKKKKKKK). The disordered stretch occupies residues 1 to 54 (MNVSVTKRRKKKKKKKSEKEKDKYLDEDERRRRKEEKKRKREKEQCDSEGETEV). The segment covering 17–30 (SEKEKDKYLDEDER) has biased composition (basic and acidic residues). The segment covering 31-41 (RRRKEEKKRKR) has biased composition (basic residues). Residues 78-182 (NESTPLQQLL…HTGFKMMSKA (105 aa)) form the Bromo domain. A histone H4K5ac H4K8ac and histone H4K5bu H4K8bu binding region spans residues 156-158 (TYN). A compositionally biased stretch (basic and acidic residues) spans 468–478 (DFHDVHNDRGG). The tract at residues 468–527 (DFHDVHNDRGGSRPSSSSSMSNNSERDHHLGSPSRISVGEQQDIHDPYEFLQSPETDNQN) is disordered. Residues 479-490 (SRPSSSSSMSNN) show a composition bias toward low complexity.

Binds acetylated histones H3 and H4. Binds butyrylated histone H4.

It localises to the nucleus. Its function is as follows. Plays a role in chromatin remodeling and regulation of transcription. Acts as a chromatin reader that recognizes and binds acylated histones: binds histones that are acetylated and/or butyrylated. This is Bromodomain-containing protein 9 (brd9) from Xenopus laevis (African clawed frog).